The chain runs to 356 residues: Nicotinate-nucleotide--dimethylbenzimidazole phosphoribosyltransferase (356 aa).

The active-site Proton acceptor is Glu317.

It belongs to the CobT family. In terms of assembly, homodimer.

It carries out the reaction 5,6-dimethylbenzimidazole + nicotinate beta-D-ribonucleotide = alpha-ribazole 5'-phosphate + nicotinate + H(+). Its pathway is nucleoside biosynthesis; alpha-ribazole biosynthesis; alpha-ribazole from 5,6-dimethylbenzimidazole: step 1/2. Its function is as follows. Catalyzes the synthesis of alpha-ribazole-5'-phosphate from nicotinate mononucleotide (NAMN) and 5,6-dimethylbenzimidazole (DMB). This chain is Nicotinate-nucleotide--dimethylbenzimidazole phosphoribosyltransferase, found in Salmonella paratyphi C (strain RKS4594).